A 74-amino-acid chain; its full sequence is ATP synthase subunit 9, mitochondrial (74 aa).

2 consecutive transmembrane segments (helical) span residues 8 to 28 (IGAG…GNVF) and 45 to 72 (LFGY…LILF).

It belongs to the ATPase C chain family. F-type ATPases have 2 components, CF(1) - the catalytic core - and CF(0) - the membrane proton channel. CF(1) has five subunits: alpha(3), beta(3), gamma(1), delta(1), epsilon(1). CF(0) has three main subunits: a, b and c.

It localises to the mitochondrion membrane. In terms of biological role, this protein is one of the chains of the nonenzymatic membrane component (F0) of mitochondrial ATPase. This Pisum sativum (Garden pea) protein is ATP synthase subunit 9, mitochondrial (ATP9).